A 90-amino-acid polypeptide reads, in one-letter code: U7-theraphotoxin-Hhn1f (90 aa).

A signal peptide spans 1–19 (MKTAIFTVVLALAVFAVLS). A propeptide spanning residues 20–50 (FGWEANEKALSEEFTELIHEKEAASETEARG) is cleaved from the precursor. Disulfide bonds link Cys51/Cys65, Cys58/Cys70, and Cys64/Cys81.

The protein belongs to the neurotoxin 10 (Hwtx-1) family. 13 (Hntx-13) subfamily. As to expression, expressed by the venom gland.

Its subcellular location is the secreted. In terms of biological role, ion channel inhibitor. This is U7-theraphotoxin-Hhn1f from Cyriopagopus hainanus (Chinese bird spider).